A 177-amino-acid chain; its full sequence is Probable inosine/xanthosine triphosphatase (177 aa).

This sequence belongs to the YjjX NTPase family. Homodimer. Mg(2+) serves as cofactor. It depends on Mn(2+) as a cofactor.

It carries out the reaction XTP + H2O = XDP + phosphate + H(+). It catalyses the reaction ITP + H2O = IDP + phosphate + H(+). Functionally, phosphatase that hydrolyzes non-canonical purine nucleotides such as XTP and ITP to their respective diphosphate derivatives. Probably excludes non-canonical purines from DNA/RNA precursor pool, thus preventing their incorporation into DNA/RNA and avoiding chromosomal lesions. This chain is Probable inosine/xanthosine triphosphatase, found in Pyrobaculum arsenaticum (strain DSM 13514 / JCM 11321 / PZ6).